The sequence spans 196 residues: Imidazoleglycerol-phosphate dehydratase (196 aa).

The protein belongs to the imidazoleglycerol-phosphate dehydratase family.

The protein resides in the cytoplasm. It carries out the reaction D-erythro-1-(imidazol-4-yl)glycerol 3-phosphate = 3-(imidazol-4-yl)-2-oxopropyl phosphate + H2O. Its pathway is amino-acid biosynthesis; L-histidine biosynthesis; L-histidine from 5-phospho-alpha-D-ribose 1-diphosphate: step 6/9. The polypeptide is Imidazoleglycerol-phosphate dehydratase (Lachnoclostridium phytofermentans (strain ATCC 700394 / DSM 18823 / ISDg) (Clostridium phytofermentans)).